The primary structure comprises 358 residues: G-protein coupled receptor 62 (358 aa).

Topologically, residues methionine 1–glycine 17 are extracellular. Residue asparagine 3 is glycosylated (N-linked (GlcNAc...) asparagine). A helical membrane pass occupies residues phenylalanine 18–valine 38. Over valine 39–histidine 53 the chain is Cytoplasmic. The helical transmembrane segment at leucine 54–proline 74 threads the bilayer. The Extracellular segment spans residues proline 75–alanine 89. A helical transmembrane segment spans residues alanine 90 to leucine 110. The Cytoplasmic segment spans residues alanine 111–proline 128. A helical transmembrane segment spans residues alanine 129–glycine 149. The Extracellular segment spans residues proline 150–alanine 176. A helical transmembrane segment spans residues methionine 177–valine 197. At alanine 198–lysine 234 the chain is on the cytoplasmic side. Residues alanine 235–cysteine 255 form a helical membrane-spanning segment. Residues alanine 256–glutamate 268 lie on the Extracellular side of the membrane. The chain crosses the membrane as a helical span at residues alanine 269–leucine 289. Over glutamine 290–threonine 358 the chain is Cytoplasmic. The interval valine 334–threonine 358 is disordered.

This sequence belongs to the G-protein coupled receptor 1 family. Homodimer. Forms heterodimer with MTNR1B. Interacts with ARRB1 and ARRB2 in a spontaneous and agonist-independent manner; leading to the internalization of GPR62 in the endosomal compartment. As to expression, expressed in the brain and testes. Expressed widely, in the brain, including the cerebral cortex, cerebellum, hippocampus,thalamus and pituitary gland. In the testes, expressed specifically in the germ cells.

It is found in the cell membrane. Its subcellular location is the endosome membrane. In terms of biological role, orphan G-protein coupled receptor. Constitutively activates the G(q/11)/inositol phosphate and the G(s)-alpha/cAMP signaling pathways. Has spontaneous activity for beta-arrestin recruitment. Shows a reciprocal regulatory interaction with the melatonin receptor MTNR1B most likely through receptor heteromerization. The chain is G-protein coupled receptor 62 (Gpr62) from Mus musculus (Mouse).